Reading from the N-terminus, the 314-residue chain is Cytochrome f (314 aa).

The first 29 residues, 1-29 (MTRSISISVLIISVLIMIYVITRTSISNA), serve as a signal peptide directing secretion. Heme is bound by residues Tyr30, Cys50, Cys53, and His54. A helical transmembrane segment spans residues 280–300 (VQGLLFFLASVILAQIFLVLK).

Belongs to the cytochrome f family. As to quaternary structure, the 4 large subunits of the cytochrome b6-f complex are cytochrome b6, subunit IV (17 kDa polypeptide, petD), cytochrome f and the Rieske protein, while the 4 small subunits are PetG, PetL, PetM and PetN. The complex functions as a dimer. Heme is required as a cofactor.

It is found in the plastid. Its subcellular location is the chloroplast thylakoid membrane. Its function is as follows. Component of the cytochrome b6-f complex, which mediates electron transfer between photosystem II (PSII) and photosystem I (PSI), cyclic electron flow around PSI, and state transitions. The sequence is that of Cytochrome f from Illicium oligandrum (Star anise).